The sequence spans 319 residues: Beta-ketoacyl-[acyl-carrier-protein] synthase III (319 aa).

Catalysis depends on residues Cys113 and His246. Residues 247–251 form an ACP-binding region; that stretch reads QANIR. The active site involves Asn276.

Belongs to the thiolase-like superfamily. FabH family. In terms of assembly, homodimer.

It localises to the cytoplasm. It catalyses the reaction malonyl-[ACP] + acetyl-CoA + H(+) = 3-oxobutanoyl-[ACP] + CO2 + CoA. It participates in lipid metabolism; fatty acid biosynthesis. Catalyzes the condensation reaction of fatty acid synthesis by the addition to an acyl acceptor of two carbons from malonyl-ACP. Catalyzes the first condensation reaction which initiates fatty acid synthesis and may therefore play a role in governing the total rate of fatty acid production. Possesses both acetoacetyl-ACP synthase and acetyl transacylase activities. Its substrate specificity determines the biosynthesis of branched-chain and/or straight-chain of fatty acids. The sequence is that of Beta-ketoacyl-[acyl-carrier-protein] synthase III from Ehrlichia ruminantium (strain Gardel).